The chain runs to 339 residues: Ketol-acid reductoisomerase (NADP(+)) (339 aa).

A KARI N-terminal Rossmann domain is found at 1 to 182 (MRVYYDRDAD…GGGRAGIIET (182 aa)). NADP(+) is bound by residues 24-27 (YGSQ), Arg-48, Ser-51, Thr-53, and 83-86 (DELQ). His-108 is an active-site residue. Gly-134 is a binding site for NADP(+). Residues 183–328 (TFREECETDL…ARLREMMPWI (146 aa)) enclose the KARI C-terminal knotted domain. Mg(2+)-binding residues include Asp-191, Glu-195, Glu-227, and Glu-231. A substrate-binding site is contributed by Ser-252.

It belongs to the ketol-acid reductoisomerase family. Mg(2+) serves as cofactor.

It carries out the reaction (2R)-2,3-dihydroxy-3-methylbutanoate + NADP(+) = (2S)-2-acetolactate + NADPH + H(+). The catalysed reaction is (2R,3R)-2,3-dihydroxy-3-methylpentanoate + NADP(+) = (S)-2-ethyl-2-hydroxy-3-oxobutanoate + NADPH + H(+). It participates in amino-acid biosynthesis; L-isoleucine biosynthesis; L-isoleucine from 2-oxobutanoate: step 2/4. It functions in the pathway amino-acid biosynthesis; L-valine biosynthesis; L-valine from pyruvate: step 2/4. Involved in the biosynthesis of branched-chain amino acids (BCAA). Catalyzes an alkyl-migration followed by a ketol-acid reduction of (S)-2-acetolactate (S2AL) to yield (R)-2,3-dihydroxy-isovalerate. In the isomerase reaction, S2AL is rearranged via a Mg-dependent methyl migration to produce 3-hydroxy-3-methyl-2-ketobutyrate (HMKB). In the reductase reaction, this 2-ketoacid undergoes a metal-dependent reduction by NADPH to yield (R)-2,3-dihydroxy-isovalerate. This is Ketol-acid reductoisomerase (NADP(+)) from Parvibaculum lavamentivorans (strain DS-1 / DSM 13023 / NCIMB 13966).